The chain runs to 62 residues: Conotoxin Lt5.5 (62 aa).

The first 22 residues, 1–22 (MRCLQVFIIFLLLIPSPPSVDA), serve as a signal peptide directing secretion. The propeptide occupies 23 to 48 (QRKTKDDVPLASFHDNAKRTLKRLWN).

It belongs to the conotoxin T superfamily. Post-translationally, contains 2 disulfide bonds that can be either 'C1-C3, C2-C4' or 'C1-C4, C2-C3', since these disulfide connectivities have been observed for conotoxins with cysteine framework V (for examples, see AC P0DQQ7 and AC P81755). As to expression, expressed by the venom duct.

Its subcellular location is the secreted. The protein is Conotoxin Lt5.5 of Conus litteratus (Lettered cone).